Consider the following 89-residue polypeptide: Small ribosomal subunit protein uS15 (89 aa).

This sequence belongs to the universal ribosomal protein uS15 family. As to quaternary structure, part of the 30S ribosomal subunit. Forms a bridge to the 50S subunit in the 70S ribosome, contacting the 23S rRNA.

In terms of biological role, one of the primary rRNA binding proteins, it binds directly to 16S rRNA where it helps nucleate assembly of the platform of the 30S subunit by binding and bridging several RNA helices of the 16S rRNA. Forms an intersubunit bridge (bridge B4) with the 23S rRNA of the 50S subunit in the ribosome. The sequence is that of Small ribosomal subunit protein uS15 from Photorhabdus laumondii subsp. laumondii (strain DSM 15139 / CIP 105565 / TT01) (Photorhabdus luminescens subsp. laumondii).